A 194-amino-acid chain; its full sequence is MFDARRPKALITGTPGVGKTTHCRKLAAFLNTKCISVGELLAGTPYVTYIPELDTYEIVDLDGAVKRVHSVVEPGHIIDTHVVELVPDPEVVIVLRKAPDVLFAELKRRGWPLKKILDNVWAEILDVVLIKARERWGEVAQIDVTRRRPEETFELLKKCVAGGRCHSDVVDWLGYSEESGFLEFIERLSRSESF.

ATP is bound by residues glycine 16, glycine 18, lysine 19, threonine 20, and threonine 21. An NMP region spans residues 36-59 (SVGELLAGTPYVTYIPELDTYEIV). The LID stretch occupies residues 108-118 (RRGWPLKKILD). Arginine 109 is a binding site for ATP.

Belongs to the adenylate kinase family. AK6 subfamily. In terms of assembly, interacts with uS11. Not a structural component of 40S pre-ribosomes, but transiently interacts with them by binding to uS11.

The catalysed reaction is AMP + ATP = 2 ADP. The enzyme catalyses ATP + H2O = ADP + phosphate + H(+). In terms of biological role, broad-specificity nucleoside monophosphate (NMP) kinase that catalyzes the reversible transfer of the terminal phosphate group between nucleoside triphosphates and monophosphates. Also has ATPase activity. Involved in the late maturation steps of the 30S ribosomal particles, specifically 16S rRNA maturation. While NMP activity is not required for ribosome maturation, ATPase activity is. Associates transiently with small ribosomal subunit protein uS11. ATP hydrolysis breaks the interaction with uS11. May temporarily remove uS11 from the ribosome to enable a conformational change of the ribosomal RNA that is needed for the final maturation step of the small ribosomal subunit. This chain is Putative adenylate kinase, found in Pyrobaculum aerophilum (strain ATCC 51768 / DSM 7523 / JCM 9630 / CIP 104966 / NBRC 100827 / IM2).